The primary structure comprises 224 residues: C-&gt;U-editing enzyme APOBEC-2 (224 aa).

A disordered region spans residues 1–24; the sequence is MAQKEEAAVATEAASQNGEDLENL. Zn(2+)-binding residues include Glu60 and His98. The CMP/dCMP-type deaminase domain occupies 64–169; sequence GRNKTFLCYV…PEIQAALKKL (106 aa). The active-site Proton donor is Glu100. 2 residues coordinate Zn(2+): Cys128 and Cys131.

This sequence belongs to the cytidine and deoxycytidylate deaminase family. Homotetramer. Zn(2+) is required as a cofactor. Expressed exclusively in heart and skeletal muscle.

It carries out the reaction cytidine(6666) in apoB mRNA + H2O + H(+) = uridine(6666) in apoB mRNA + NH4(+). Functionally, probable C to U editing enzyme whose physiological substrate is not yet known. Does not display detectable apoB mRNA editing. Has a low intrinsic cytidine deaminase activity. May play a role in the epigenetic regulation of gene expression through the process of active DNA demethylation. This chain is C-&gt;U-editing enzyme APOBEC-2 (APOBEC2), found in Homo sapiens (Human).